The following is a 163-amino-acid chain: NADPH-dependent 7-cyano-7-deazaguanine reductase (163 aa).

Catalysis depends on cysteine 54, which acts as the Thioimide intermediate. Aspartate 61 (proton donor) is an active-site residue. Substrate contacts are provided by residues valine 76 to serine 78 and histidine 95 to glutamate 96.

The protein belongs to the GTP cyclohydrolase I family. QueF type 1 subfamily.

Its subcellular location is the cytoplasm. It carries out the reaction 7-aminomethyl-7-carbaguanine + 2 NADP(+) = 7-cyano-7-deazaguanine + 2 NADPH + 3 H(+). Its pathway is tRNA modification; tRNA-queuosine biosynthesis. In terms of biological role, catalyzes the NADPH-dependent reduction of 7-cyano-7-deazaguanine (preQ0) to 7-aminomethyl-7-deazaguanine (preQ1). The sequence is that of NADPH-dependent 7-cyano-7-deazaguanine reductase from Streptococcus thermophilus (strain CNRZ 1066).